A 1368-amino-acid polypeptide reads, in one-letter code: MHLQNTHNTMESNAAMDAASPASRDVRQFHDLITCRLCRGYMIDPTTVDYCYHTYCRSCILKHLLRAVYCPECKASGGKEINELNLKSDDTLRSLIYKLVPGLYQRECKELADFKEQHDLVDEQTTDEPEFFTTTELISLSLEYHPAMLHQCGPGEVPPTIYLQCAAGLPVELLKRFLCSKYNIETDNGLVEVEVTYKDEVLPTNFTLMDVAYCYNWSRESPMAFCYRILLYDNEQTKNDENNLSRINQDIEPEHSVRRSKSAKSVTFAEDLESEIDSGSPRSKVRCKTPPKVSPSSKNKRLTSSKREAEPESPVSNFKSLRSNDMRYSDYAVSKVKSEPEQEQFLLPREREQQPLEANTNIVVSIPPSQLRKSYVDAEDFELKTANRKGVGHLPKLKIELNSMKSKLSMPLSAGPRLEDTSCSLSCSAQQLDLETYAKNIGLKPIEQPLQQSASNPDSKYSPNASPMSSCSSSTNGSSSSLGTADASTSTSTSSSHRKRKKKHSKEPKDANGKRKKLHAEISSQTDGKMKVKITAKPNHKLDFKRSHSLASGELDLQKLKLDSTSTSEALNRTLGEEARSINSLVVGGAPTPPPTPTAEPEQQQQQQQQQQQPQQQQQQQQQQQQQQQFVVLPKIKDLTLPTSPPLPPSLFKAYTPSTTPTAPHTVAGGKPKQQQQQMPQQPQAVLQQSLAKTNPAKPPLSSNNNRKPNSGHFAVPQAPTHRNMYHMQRYQSTPSSIASAANKMPKRSMSLDESHPAKQARLSQAQAMASSYAAKLHMQTSNQAKSQAAAFLPNPQMRSYGLPDLGSKPTLPMLCPASSSSQVTITPRPRATPSIYSFSEPNIHVPALEIVRLPVNKQSAGGKGLTMPPLSPPATSSARLMGPPAALPKHAGHGHGAAKRSCQMPTMPMPLPLPLPMPMTTIPAIVKSPPLSVALSGQRNNKGNSSNSNAYRTSPPALINLRNTAAPQHSFPSKSSPKVEANSKKSPPAAGCQGKTNGTAALDKSKTSLREFRPAVQSAVTATATTSVTTAAGAGAGAGTGTGTALAKDADILDLSANPGRSNNDAKLAPNSPPAGNNNNNNNNNNNNNNNNNNNNNNSTSNSLEAALNKIKQNISANSNGGPSTTSGSNSNGTTNGDDLQNLHMLSESATAREKISIKAASSGNGSGSTSSSSAKPKNANALVRPQNASVRSIPNPSALAFRNQPAAASTAASISKPLTVRAEEKPKVSTSNPGSLSPTNTSSSSSSSSSGSSGCSAATSPRAMTKKPTTIDQVAANLNIRAEAKAAALAEEAPPVLSSNAAKSPELAKTTTAVALRPEPKETPITVSAASTLLTIPSAVSSVSAVPETMAKPPVQIANAPVASSA.

The segment at 35 to 74 (CRLCRGYMIDPTTVDYCYHTYCRSCILKHLLRAVYCPECK) adopts an RING-type zinc-finger fold. 10 disordered regions span residues 245 to 321 (SRIN…FKSL), 448 to 628 (QPLQ…QQQQ), 640 to 718 (TLPT…AVPQ), 861 to 903 (AGGK…KRSC), 935 to 1001 (ALSG…NGTA), 1057 to 1103 (SANP…STSN), 1116 to 1141 (ISANSNGGPSTTSGSNSNGTTNGDDL), 1161 to 1193 (AASSGNGSGSTSSSSAKPKNANALVRPQNASVR), 1211 to 1271 (STAA…KKPT), and 1298 to 1322 (VLSSNAAKSPELAKTTTAVALRPEP). The span at 449 to 461 (PLQQSASNPDSKY) shows a compositional bias: polar residues. Residues 462–495 (SPNASPMSSCSSSTNGSSSSLGTADASTSTSTSS) show a composition bias toward low complexity. Residues 496-506 (SHRKRKKKHSK) are compositionally biased toward basic residues. 2 stretches are compositionally biased toward low complexity: residues 599–628 (AEPEQQQQQQQQQQQPQQQQQQQQQQQQQQ) and 672–689 (PKQQQQQMPQQPQAVLQQ). Polar residues-rich tracts occupy residues 936–953 (LSGQRNNKGNSSNSNAYR) and 962–977 (LRNTAAPQHSFPSKSS). Composition is skewed to low complexity over residues 1078–1099 (NNNNNNNNNNNNNNNNNNNNNN), 1119–1138 (NSNGGPSTTSGSNSNGTTNG), 1161–1183 (AASSGNGSGSTSSSSAKPKNANA), and 1231–1263 (STSNPGSLSPTNTSSSSSSSSSGSSGCSAATSP).

The protein localises to the nucleus. Its function is as follows. Regulates expression of the homeotic selector genes by influencing higher-order chromatin structure through interaction with other proteins. The protein is Protein suppressor 2 of zeste (Su(z)2) of Drosophila melanogaster (Fruit fly).